Reading from the N-terminus, the 575-residue chain is Alpha-(1,6)-fucosyltransferase (575 aa).

Over 1–9 (MRPWTGSWR) the chain is Cytoplasmic. The helical; Signal-anchor for type II membrane protein transmembrane segment at 10–30 (WIMLILFAWGTLLFYIGGHLV) threads the bilayer. Residues 31–575 (RDNDHSDHSS…KYPTYPEADK (545 aa)) are Lumenal-facing. Intrachain disulfides connect C204-C266, C212-C230, and C218-C222. The 288-residue stretch at 206–493 (KAKKLVCNIN…PDASANFRSL (288 aa)) folds into the GT23 domain. S278 carries the post-translational modification Phosphoserine. An SH3-binding motif is present at residues 299 to 305 (PRPPYLP). Residues 365-366 (RR) form an important for donor substrate binding region. C465 and C472 are disulfide-bonded. Residues 502 to 563 (PNAHNQIAIY…PSYKVREKIE (62 aa)) enclose the SH3 domain.

The protein belongs to the glycosyltransferase 23 family. Post-translationally, tyrosine phosphorylated by PKDCC/VLK. In terms of tissue distribution, highest expression in brain.

It localises to the golgi apparatus. It is found in the golgi stack membrane. It carries out the reaction N(4)-{beta-D-GlcNAc-(1-&gt;2)-alpha-D-Man-(1-&gt;3)-[beta-D-GlcNAc-(1-&gt;2)-alpha-D-Man-(1-&gt;6)]-beta-D-Man-(1-&gt;4)-beta-D-GlcNAc-(1-&gt;4)-beta-D-GlcNAc}-L-asparaginyl-[protein] + GDP-beta-L-fucose = an N(4)-{beta-D-GlcNAc-(1-&gt;2)-alpha-D-Man-(1-&gt;3)-[beta-D-GlcNAc-(1-&gt;2)-alpha-D-Man-(1-&gt;6)]-beta-D-Man-(1-&gt;4)-beta-D-GlcNAc-(1-&gt;4)-[alpha-L-Fuc-(1-&gt;6)]-beta-D-GlcNAc}-L-asparaginyl-[protein] + GDP + H(+). Its pathway is protein modification; protein glycosylation. Functionally, catalyzes the addition of fucose in alpha 1-6 linkage to the first GlcNAc residue, next to the peptide chains in N-glycans. In Sus scrofa (Pig), this protein is Alpha-(1,6)-fucosyltransferase (FUT8).